Consider the following 125-residue polypeptide: Ribosome-binding factor A (125 aa).

The protein belongs to the RbfA family. Monomer. Binds 30S ribosomal subunits, but not 50S ribosomal subunits or 70S ribosomes.

It localises to the cytoplasm. Functionally, one of several proteins that assist in the late maturation steps of the functional core of the 30S ribosomal subunit. Associates with free 30S ribosomal subunits (but not with 30S subunits that are part of 70S ribosomes or polysomes). Required for efficient processing of 16S rRNA. May interact with the 5'-terminal helix region of 16S rRNA. The polypeptide is Ribosome-binding factor A (Methylobacillus flagellatus (strain ATCC 51484 / DSM 6875 / VKM B-1610 / KT)).